Consider the following 385-residue polypeptide: Queuine tRNA-ribosyltransferase (385 aa).

The active-site Proton acceptor is the aspartate 92. Residues 92–96 (DSGGF), aspartate 146, glutamine 188, and glycine 215 contribute to the substrate site. An RNA binding region spans residues 246–252 (GVGHPED). Aspartate 265 acts as the Nucleophile in catalysis. Residues 270 to 274 (TRTGR) form an RNA binding; important for wobble base 34 recognition region. Zn(2+)-binding residues include cysteine 303, cysteine 305, cysteine 308, and histidine 334.

The protein belongs to the queuine tRNA-ribosyltransferase family. In terms of assembly, homodimer. Within each dimer, one monomer is responsible for RNA recognition and catalysis, while the other monomer binds to the replacement base PreQ1. Zn(2+) is required as a cofactor.

The enzyme catalyses 7-aminomethyl-7-carbaguanine + guanosine(34) in tRNA = 7-aminomethyl-7-carbaguanosine(34) in tRNA + guanine. Its pathway is tRNA modification; tRNA-queuosine biosynthesis. In terms of biological role, catalyzes the base-exchange of a guanine (G) residue with the queuine precursor 7-aminomethyl-7-deazaguanine (PreQ1) at position 34 (anticodon wobble position) in tRNAs with GU(N) anticodons (tRNA-Asp, -Asn, -His and -Tyr). Catalysis occurs through a double-displacement mechanism. The nucleophile active site attacks the C1' of nucleotide 34 to detach the guanine base from the RNA, forming a covalent enzyme-RNA intermediate. The proton acceptor active site deprotonates the incoming PreQ1, allowing a nucleophilic attack on the C1' of the ribose to form the product. After dissociation, two additional enzymatic reactions on the tRNA convert PreQ1 to queuine (Q), resulting in the hypermodified nucleoside queuosine (7-(((4,5-cis-dihydroxy-2-cyclopenten-1-yl)amino)methyl)-7-deazaguanosine). The chain is Queuine tRNA-ribosyltransferase from Thermus thermophilus (strain ATCC 27634 / DSM 579 / HB8).